We begin with the raw amino-acid sequence, 185 residues long: Ribosome-recycling factor (185 aa).

This sequence belongs to the RRF family.

It localises to the cytoplasm. Responsible for the release of ribosomes from messenger RNA at the termination of protein biosynthesis. May increase the efficiency of translation by recycling ribosomes from one round of translation to another. The polypeptide is Ribosome-recycling factor (Vibrio vulnificus (strain YJ016)).